The sequence spans 164 residues: Urocortin-3 (164 aa).

An N-terminal signal peptide occupies residues 1–23 (MLMPTYFLLPLLLLLGGPRTSLS). The propeptide occupies 24-121 (HKFYNTGPVF…PDKPKSDRGT (98 aa)). Residues 58-120 (SFGHLPTQDP…YPDKPKSDRG (63 aa)) are disordered. Over residues 110–120 (LYPDKPKSDRG) the composition is skewed to basic and acidic residues. Ile-160 is modified (isoleucine amide).

This sequence belongs to the sauvagine/corticotropin-releasing factor/urotensin I family. Binds with high affinity to CRF receptors 2-alpha and 2-beta. In terms of tissue distribution, expressed in some areas of the brain including the hypothalamus, amygdala, and brainstem, but is not evident in the cerebellum, pituitary, or cerebral cortex; it is also expressed peripherally in small intestine and skin.

The protein resides in the secreted. Its function is as follows. Suppresses food intake, delays gastric emptying and decreases heat-induced edema. Might represent an endogenous ligand for maintaining homeostasis after stress. This chain is Urocortin-3 (Ucn3), found in Mus musculus (Mouse).